We begin with the raw amino-acid sequence, 466 residues long: Transcription factor SOX-10 (466 aa).

Disordered stretches follow at residues 1–67, 160–200, 213–275, 344–375, and 433–466; these read MAEE…DDDK, LRMQ…QGGA, DHRH…DFGN, TVSP…QPST, and RPLY…LSRP. A compositionally biased stretch (low complexity) spans 23–32; it reads LSPGSAPSLG. Serine 24 carries the phosphoserine modification. The segment at 62–102 is dimerization (DIM); it reads EADDDKFPVCIREAVSQVLSGYDWTLVPMPVRVNGASKSKP. Residues 104–172 constitute a DNA-binding region (HMG box); sequence VKRPMNAFMV…QHKKDHPDYK (69 aa). Residues 160–173 show a composition bias toward basic and acidic residues; the sequence is LRMQHKKDHPDYKY. Over residues 183 to 200 the composition is skewed to low complexity; it reads AAQGEAECPGGEAEQGGA. The interval 228 to 310 is transactivation domain (TAM); it reads PEHPSGQSHG…LPPNGHPGHV (83 aa). A compositionally biased stretch (basic and acidic residues) spans 254–271; it reads ADPKRDGRSLGEGGKPHI. Residues 353 to 466 are transactivation domain (TAC); that stretch reads KAQVKTETTG…QPVYTTLSRP (114 aa). Over residues 440-466 the composition is skewed to polar residues; the sequence is SDPSPSGPQSHSPTHWEQPVYTTLSRP.

Monomer. Interacts with Armcx3 at the mitochondrial outer membrane surface. Interacts with PAX3. As to expression, expressed in oligodendroglia of the spinal tube (at protein level).

Its subcellular location is the cytoplasm. The protein localises to the nucleus. It localises to the mitochondrion outer membrane. In terms of biological role, transcription factor that plays a central role in developing and mature glia. Specifically activates expression of myelin genes, during oligodendrocyte (OL) maturation, such as DUSP15 and MYRF, thereby playing a central role in oligodendrocyte maturation and CNS myelination. Once induced, MYRF cooperates with SOX10 to implement the myelination program. Transcriptional activator of MITF, acting synergistically with PAX3. Transcriptional activator of MBP, via binding to the gene promoter. The chain is Transcription factor SOX-10 (Sox10) from Mus musculus (Mouse).